Reading from the N-terminus, the 263-residue chain is Phosphoinositide-3-kinase-interacting protein 1 (263 aa).

A signal peptide spans 1–18 (MFGRLYFMLLLSVGLVDC). The Extracellular portion of the chain corresponds to 19-163 (LSVVKDCITN…SGPKKKKDLG (145 aa)). Residues 24 to 99 (DCITNNGEDY…KKEACDIRIC (76 aa)) form the Kringle domain. 3 disulfide bridges follow: Cys-25-Cys-99, Cys-46-Cys-80, and Cys-69-Cys-94. Asn-103 carries an N-linked (GlcNAc...) asparagine glycan. Residues 164–184 (TLGYVLAVFMMAIIILLGGGI) traverse the membrane as a helical segment. Residues 185-263 (TMGYFYKRGR…LMGSAGTPGA (79 aa)) lie on the Cytoplasmic side of the membrane. The disordered stretch occupies residues 239–263 (NNQTPTQEPVEGADPLMGSAGTPGA).

The protein resides in the cell membrane. In terms of biological role, negative regulator of hepatic phosphatidylinositol 3-kinase (PI3K) activity. This is Phosphoinositide-3-kinase-interacting protein 1 (pik3ip1) from Danio rerio (Zebrafish).